A 157-amino-acid chain; its full sequence is MNINLTMFGQLIMFAMFTWFCMKFIWPPIVMAMEERQKRIEGGLLAAERGRFEKAEAQIKAKEIINQSKSLAAEIIANATRQALNMVEDAKYIALKEAGKVKEQAQAQLEQDTICVRNELKNQVSDLVIQGVNAVLDKEVDVKLHQQMLGKLSESLS.

A helical membrane pass occupies residues 11-31 (LIMFAMFTWFCMKFIWPPIVM).

This sequence belongs to the ATPase B chain family. In terms of assembly, F-type ATPases have 2 components, F(1) - the catalytic core - and F(0) - the membrane proton channel. F(1) has five subunits: alpha(3), beta(3), gamma(1), delta(1), epsilon(1). F(0) has three main subunits: a(1), b(2) and c(10-14). The alpha and beta chains form an alternating ring which encloses part of the gamma chain. F(1) is attached to F(0) by a central stalk formed by the gamma and epsilon chains, while a peripheral stalk is formed by the delta and b chains.

The protein localises to the cell inner membrane. Functionally, f(1)F(0) ATP synthase produces ATP from ADP in the presence of a proton or sodium gradient. F-type ATPases consist of two structural domains, F(1) containing the extramembraneous catalytic core and F(0) containing the membrane proton channel, linked together by a central stalk and a peripheral stalk. During catalysis, ATP synthesis in the catalytic domain of F(1) is coupled via a rotary mechanism of the central stalk subunits to proton translocation. In terms of biological role, component of the F(0) channel, it forms part of the peripheral stalk, linking F(1) to F(0). In Vesicomyosocius okutanii subsp. Calyptogena okutanii (strain HA), this protein is ATP synthase subunit b.